Reading from the N-terminus, the 71-residue chain is ATP synthase F(0) complex subunit e, mitochondrial (71 aa).

An N6-acetyllysine modification is found at K34. At S68 the chain carries Phosphoserine.

The protein belongs to the ATPase e subunit family. In terms of assembly, component of the ATP synthase complex composed at least of ATP5F1A/subunit alpha, ATP5F1B/subunit beta, ATP5MC1/subunit c (homooctomer), MT-ATP6/subunit a, MT-ATP8/subunit 8, ATP5ME/subunit e, ATP5MF/subunit f, ATP5MG/subunit g, ATP5MK/subunit k, ATP5MJ/subunit j, ATP5F1C/subunit gamma, ATP5F1D/subunit delta, ATP5F1E/subunit epsilon, ATP5PF/subunit F6, ATP5PB/subunit b, ATP5PD/subunit d, ATP5PO/subunit OSCP. ATP synthase complex consists of a soluble F(1) head domain (subunits alpha(3) and beta(3)) - the catalytic core - and a membrane F(0) domain - the membrane proton channel (subunits c, a, 8, e, f, g, k and j). These two domains are linked by a central stalk (subunits gamma, delta, and epsilon) rotating inside the F1 region and a stationary peripheral stalk (subunits F6, b, d, and OSCP). In terms of tissue distribution, mammary gland, liver, kidney, heart, spleen, brain and lung.

It is found in the mitochondrion. The protein resides in the mitochondrion inner membrane. Subunit e, of the mitochondrial membrane ATP synthase complex (F(1)F(0) ATP synthase or Complex V) that produces ATP from ADP in the presence of a proton gradient across the membrane which is generated by electron transport complexes of the respiratory chain. ATP synthase complex consist of a soluble F(1) head domain - the catalytic core - and a membrane F(1) domain - the membrane proton channel. These two domains are linked by a central stalk rotating inside the F(1) region and a stationary peripheral stalk. During catalysis, ATP synthesis in the catalytic domain of F(1) is coupled via a rotary mechanism of the central stalk subunits to proton translocation. In vivo, can only synthesize ATP although its ATP hydrolase activity can be activated artificially in vitro. Part of the complex F(0) domain. The protein is ATP synthase F(0) complex subunit e, mitochondrial of Mus musculus (Mouse).